A 187-amino-acid polypeptide reads, in one-letter code: Ribosome-recycling factor (187 aa).

Belongs to the RRF family.

The protein localises to the cytoplasm. Functionally, responsible for the release of ribosomes from messenger RNA at the termination of protein biosynthesis. May increase the efficiency of translation by recycling ribosomes from one round of translation to another. This chain is Ribosome-recycling factor, found in Xanthobacter autotrophicus (strain ATCC BAA-1158 / Py2).